Reading from the N-terminus, the 939-residue chain is Nonsense-mediated mRNA decay factor SMG8 (939 aa).

2 disordered regions span residues Lys-561–Pro-600 and Leu-617–Glu-645. A compositionally biased stretch (acidic residues) spans Gly-567 to Glu-587. The span at Leu-617–Gly-629 shows a compositional bias: low complexity.

Belongs to the SMG8 family.

Functionally, involved in nonsense-mediated decay (NMD) of mRNAs containing premature stop codons. Probable component of kinase complex containing nonC and recruited to stalled ribosomes. The polypeptide is Nonsense-mediated mRNA decay factor SMG8 (Drosophila ananassae (Fruit fly)).